The sequence spans 484 residues: Bifunctional protein GlmU (484 aa).

Residues 1–240 (MSNPHSSAVI…HRELAGVNDR (240 aa)) are pyrophosphorylase. UDP-N-acetyl-alpha-D-glucosamine contacts are provided by residues 12–15 (LAAG), Lys-26, Gln-83, and 88–89 (GT). Asp-113 lines the Mg(2+) pocket. UDP-N-acetyl-alpha-D-glucosamine contacts are provided by Gly-150, Glu-165, Asn-180, and Asn-238. Position 238 (Asn-238) interacts with Mg(2+). The segment at 241–261 (VQLAQAGKILNQRLVEDAMRN) is linker. Positions 262–484 (GATIVDPDTT…QAHAHETKEG (223 aa)) are N-acetyltransferase. Positions 343 and 361 each coordinate UDP-N-acetyl-alpha-D-glucosamine. The active-site Proton acceptor is His-373. Residues Tyr-376 and Asn-387 each contribute to the UDP-N-acetyl-alpha-D-glucosamine site. Acetyl-CoA is bound by residues Ala-390, 396–397 (NY), Ser-415, and Ala-433. The tract at residues 461-484 (EKNRPGTPAADAARQAHAHETKEG) is disordered.

In the N-terminal section; belongs to the N-acetylglucosamine-1-phosphate uridyltransferase family. The protein in the C-terminal section; belongs to the transferase hexapeptide repeat family. Homotrimer. Mg(2+) is required as a cofactor.

It is found in the cytoplasm. The catalysed reaction is alpha-D-glucosamine 1-phosphate + acetyl-CoA = N-acetyl-alpha-D-glucosamine 1-phosphate + CoA + H(+). It carries out the reaction N-acetyl-alpha-D-glucosamine 1-phosphate + UTP + H(+) = UDP-N-acetyl-alpha-D-glucosamine + diphosphate. Its pathway is nucleotide-sugar biosynthesis; UDP-N-acetyl-alpha-D-glucosamine biosynthesis; N-acetyl-alpha-D-glucosamine 1-phosphate from alpha-D-glucosamine 6-phosphate (route II): step 2/2. The protein operates within nucleotide-sugar biosynthesis; UDP-N-acetyl-alpha-D-glucosamine biosynthesis; UDP-N-acetyl-alpha-D-glucosamine from N-acetyl-alpha-D-glucosamine 1-phosphate: step 1/1. It functions in the pathway bacterial outer membrane biogenesis; LPS lipid A biosynthesis. Its function is as follows. Catalyzes the last two sequential reactions in the de novo biosynthetic pathway for UDP-N-acetylglucosamine (UDP-GlcNAc). The C-terminal domain catalyzes the transfer of acetyl group from acetyl coenzyme A to glucosamine-1-phosphate (GlcN-1-P) to produce N-acetylglucosamine-1-phosphate (GlcNAc-1-P), which is converted into UDP-GlcNAc by the transfer of uridine 5-monophosphate (from uridine 5-triphosphate), a reaction catalyzed by the N-terminal domain. The protein is Bifunctional protein GlmU of Corynebacterium diphtheriae (strain ATCC 700971 / NCTC 13129 / Biotype gravis).